The primary structure comprises 280 residues: MAIRKYKPTTPGRRGASVSDFAEITRSTPEKSLVRPLHGHGGRNAHGRITTRHKGGGHKRAYRVIDFRRNDKDGVNAKVAHIEYDPNRTARIALLHYLDGEKRYIIAPNGLSQGDVVESGANADIKPGNNLPLRNIPAGTLVHAVELRPGGGAKLARSAGSSIQLLGKEASYASLRMPSGEIRRVDVRCRATVGEVGNAEQANINWGKAGRMRWKGKRPSVRGVVMNPVDHPHGGGEGKTSGGRHPVSPWGKPEGRTRNPNKASNKLIVRRRRTGKKHGR.

Disordered regions lie at residues 27–58 and 226–280; these read STPEKSLVRPLHGHGGRNAHGRITTRHKGGGH and MNPV…KHGR. Composition is skewed to basic residues over residues 37 to 58 and 268 to 280; these read LHGHGGRNAHGRITTRHKGGGH and IVRRRRTGKKHGR.

This sequence belongs to the universal ribosomal protein uL2 family. Part of the 50S ribosomal subunit. Forms a bridge to the 30S subunit in the 70S ribosome.

One of the primary rRNA binding proteins. Required for association of the 30S and 50S subunits to form the 70S ribosome, for tRNA binding and peptide bond formation. It has been suggested to have peptidyltransferase activity; this is somewhat controversial. Makes several contacts with the 16S rRNA in the 70S ribosome. The chain is Large ribosomal subunit protein uL2 from Mycobacterium marinum (strain ATCC BAA-535 / M).